We begin with the raw amino-acid sequence, 552 residues long: Glutamine--tRNA ligase (552 aa).

The 'HIGH' region signature appears at 34-44 (PEPNGYLHIGH). ATP is bound by residues 35–37 (EPN) and 41–47 (HIGHAKS). The L-glutamine site is built by D67 and Y212. Residues T231, 261-262 (RL), and 269-271 (MSK) each bind ATP. The 'KMSKS' region signature appears at 268–272 (IMSKR).

The protein belongs to the class-I aminoacyl-tRNA synthetase family. Monomer.

It localises to the cytoplasm. The enzyme catalyses tRNA(Gln) + L-glutamine + ATP = L-glutaminyl-tRNA(Gln) + AMP + diphosphate. This chain is Glutamine--tRNA ligase, found in Pectobacterium atrosepticum (strain SCRI 1043 / ATCC BAA-672) (Erwinia carotovora subsp. atroseptica).